Consider the following 177-residue polypeptide: Adenine phosphoribosyltransferase (177 aa).

Belongs to the purine/pyrimidine phosphoribosyltransferase family. As to quaternary structure, homodimer.

The protein resides in the cytoplasm. The enzyme catalyses AMP + diphosphate = 5-phospho-alpha-D-ribose 1-diphosphate + adenine. Its pathway is purine metabolism; AMP biosynthesis via salvage pathway; AMP from adenine: step 1/1. Its function is as follows. Catalyzes a salvage reaction resulting in the formation of AMP, that is energically less costly than de novo synthesis. The polypeptide is Adenine phosphoribosyltransferase (Acidothermus cellulolyticus (strain ATCC 43068 / DSM 8971 / 11B)).